A 455-amino-acid polypeptide reads, in one-letter code: UDP-N-acetylmuramoylalanine--D-glutamate ligase (455 aa).

119–125 (GTNGKTT) contacts ATP.

This sequence belongs to the MurCDEF family.

The protein resides in the cytoplasm. It carries out the reaction UDP-N-acetyl-alpha-D-muramoyl-L-alanine + D-glutamate + ATP = UDP-N-acetyl-alpha-D-muramoyl-L-alanyl-D-glutamate + ADP + phosphate + H(+). The protein operates within cell wall biogenesis; peptidoglycan biosynthesis. Its function is as follows. Cell wall formation. Catalyzes the addition of glutamate to the nucleotide precursor UDP-N-acetylmuramoyl-L-alanine (UMA). The sequence is that of UDP-N-acetylmuramoylalanine--D-glutamate ligase from Listeria monocytogenes serovar 1/2a (strain ATCC BAA-679 / EGD-e).